Consider the following 135-residue polypeptide: uncharacterized protein (135 aa).

The tract at residues 100 to 125 (KESPATSSEDISSCSDCDSERLQSDD) is disordered. Residues 106 to 115 (SSEDISSCSD) are compositionally biased toward low complexity.

This is an uncharacterized protein from Microplitis demolitor (Parasitoid wasp).